The sequence spans 729 residues: Fatty acid oxidation complex subunit alpha (729 aa).

An enoyl-CoA hydratase/isomerase region spans residues 1–189 (MLYKGDTLYL…KIGLVDGVVK (189 aa)). D296 contributes to the substrate binding site. A 3-hydroxyacyl-CoA dehydrogenase region spans residues 311–729 (ETPKHAAVLG…ARPVGELKTA (419 aa)). Residues M324, D343, 400-402 (VVE), K407, and S429 contribute to the NAD(+) site. The active-site For 3-hydroxyacyl-CoA dehydrogenase activity is the H450. An NAD(+)-binding site is contributed by N453. Substrate contacts are provided by N500 and Y660.

This sequence in the N-terminal section; belongs to the enoyl-CoA hydratase/isomerase family. The protein in the C-terminal section; belongs to the 3-hydroxyacyl-CoA dehydrogenase family. Heterotetramer of two alpha chains (FadB) and two beta chains (FadA).

The catalysed reaction is a (3S)-3-hydroxyacyl-CoA + NAD(+) = a 3-oxoacyl-CoA + NADH + H(+). It catalyses the reaction a (3S)-3-hydroxyacyl-CoA = a (2E)-enoyl-CoA + H2O. The enzyme catalyses a 4-saturated-(3S)-3-hydroxyacyl-CoA = a (3E)-enoyl-CoA + H2O. It carries out the reaction (3S)-3-hydroxybutanoyl-CoA = (3R)-3-hydroxybutanoyl-CoA. The catalysed reaction is a (3Z)-enoyl-CoA = a 4-saturated (2E)-enoyl-CoA. It catalyses the reaction a (3E)-enoyl-CoA = a 4-saturated (2E)-enoyl-CoA. Its pathway is lipid metabolism; fatty acid beta-oxidation. Functionally, involved in the aerobic and anaerobic degradation of long-chain fatty acids via beta-oxidation cycle. Catalyzes the formation of 3-oxoacyl-CoA from enoyl-CoA via L-3-hydroxyacyl-CoA. It can also use D-3-hydroxyacyl-CoA and cis-3-enoyl-CoA as substrate. This is Fatty acid oxidation complex subunit alpha from Enterobacter cloacae.